We begin with the raw amino-acid sequence, 702 residues long: Ribosomal RNA large subunit methyltransferase K/L (702 aa).

In terms of domain architecture, THUMP spans L43 to L154.

This sequence belongs to the methyltransferase superfamily. RlmKL family.

It is found in the cytoplasm. The catalysed reaction is guanosine(2445) in 23S rRNA + S-adenosyl-L-methionine = N(2)-methylguanosine(2445) in 23S rRNA + S-adenosyl-L-homocysteine + H(+). The enzyme catalyses guanosine(2069) in 23S rRNA + S-adenosyl-L-methionine = N(2)-methylguanosine(2069) in 23S rRNA + S-adenosyl-L-homocysteine + H(+). In terms of biological role, specifically methylates the guanine in position 2445 (m2G2445) and the guanine in position 2069 (m7G2069) of 23S rRNA. The polypeptide is Ribosomal RNA large subunit methyltransferase K/L (Escherichia coli O1:K1 / APEC).